A 283-amino-acid chain; its full sequence is 3-methyl-2-oxobutanoate hydroxymethyltransferase (283 aa).

Aspartate 44 and aspartate 83 together coordinate Mg(2+). 3-methyl-2-oxobutanoate contacts are provided by residues 44–45 (DS), aspartate 83, and lysine 112. Glutamate 114 is a Mg(2+) binding site. The Proton acceptor role is filled by glutamate 181.

Belongs to the PanB family. In terms of assembly, homodecamer; pentamer of dimers. Mg(2+) serves as cofactor.

The protein localises to the cytoplasm. The catalysed reaction is 3-methyl-2-oxobutanoate + (6R)-5,10-methylene-5,6,7,8-tetrahydrofolate + H2O = 2-dehydropantoate + (6S)-5,6,7,8-tetrahydrofolate. The protein operates within cofactor biosynthesis; coenzyme A biosynthesis. In terms of biological role, catalyzes the reversible reaction in which hydroxymethyl group from 5,10-methylenetetrahydrofolate is transferred onto alpha-ketoisovalerate to form ketopantoate. This chain is 3-methyl-2-oxobutanoate hydroxymethyltransferase, found in Pyrococcus furiosus (strain ATCC 43587 / DSM 3638 / JCM 8422 / Vc1).